Reading from the N-terminus, the 194-residue chain is Imidazoleglycerol-phosphate dehydratase (194 aa).

Belongs to the imidazoleglycerol-phosphate dehydratase family.

It localises to the cytoplasm. The catalysed reaction is D-erythro-1-(imidazol-4-yl)glycerol 3-phosphate = 3-(imidazol-4-yl)-2-oxopropyl phosphate + H2O. It functions in the pathway amino-acid biosynthesis; L-histidine biosynthesis; L-histidine from 5-phospho-alpha-D-ribose 1-diphosphate: step 6/9. The chain is Imidazoleglycerol-phosphate dehydratase from Bacillus cereus (strain B4264).